The chain runs to 256 residues: Small ribosomal subunit protein eS1 (256 aa).

Alanine 2 is modified (N-acetylalanine; partial).

The protein belongs to the eukaryotic ribosomal protein eS1 family. In terms of assembly, component of the small ribosomal subunit. Mature ribosomes consist of a small (40S) and a large (60S) subunit. The 40S subunit contains about 33 different proteins and 1 molecule of RNA (18S). The 60S subunit contains about 49 different proteins and 3 molecules of RNA (25S, 5.8S and 5S).

The protein localises to the cytoplasm. This is Small ribosomal subunit protein eS1 from Fusarium vanettenii (strain ATCC MYA-4622 / CBS 123669 / FGSC 9596 / NRRL 45880 / 77-13-4) (Fusarium solani subsp. pisi).